The primary structure comprises 752 residues: RNA-directed RNA polymerase catalytic subunit (752 aa).

2 short sequence motifs (nuclear localization signal) span residues 187 to 195 (IKKKLPAKN) and 203 to 216 (RIPM…TRVE). Residues 249-256 (RGFVLVVE) form a promoter-binding site region. One can recognise a RdRp catalytic domain in the interval 286–482 (VAKMLSNCPP…GINMSKKKSY (197 aa)).

Belongs to the influenza viruses polymerase PB1 family. In terms of assembly, influenza RNA polymerase is composed of three subunits: PB1, PB2 and PA. Interacts (via N-terminus) with PA (via C-terminus). Interacts (via C-terminus) with PB2 (via N-terminus); this interaction is essential for transcription initiation. In terms of processing, phosphorylated by host PRKCA.

The protein localises to the host nucleus. Its subcellular location is the host cytoplasm. It catalyses the reaction RNA(n) + a ribonucleoside 5'-triphosphate = RNA(n+1) + diphosphate. In terms of biological role, RNA-dependent RNA polymerase which is responsible for replication and transcription of virus RNA segments. The transcription of viral mRNAs occurs by a unique mechanism called cap-snatching. 5' methylated caps of cellular mRNAs are cleaved after 10-13 nucleotides by PA. In turn, these short capped RNAs are used as primers by PB1 for transcription of viral mRNAs. During virus replication, PB1 initiates RNA synthesis and copy vRNA into complementary RNA (cRNA) which in turn serves as a template for the production of more vRNAs. The protein is RNA-directed RNA polymerase catalytic subunit of Influenza B virus (strain B/Ann Arbor/1/1966 [wild-type]).